Here is a 155-residue protein sequence, read N- to C-terminus: SsrA-binding protein (155 aa).

Belongs to the SmpB family.

The protein localises to the cytoplasm. Functionally, required for rescue of stalled ribosomes mediated by trans-translation. Binds to transfer-messenger RNA (tmRNA), required for stable association of tmRNA with ribosomes. tmRNA and SmpB together mimic tRNA shape, replacing the anticodon stem-loop with SmpB. tmRNA is encoded by the ssrA gene; the 2 termini fold to resemble tRNA(Ala) and it encodes a 'tag peptide', a short internal open reading frame. During trans-translation Ala-aminoacylated tmRNA acts like a tRNA, entering the A-site of stalled ribosomes, displacing the stalled mRNA. The ribosome then switches to translate the ORF on the tmRNA; the nascent peptide is terminated with the 'tag peptide' encoded by the tmRNA and targeted for degradation. The ribosome is freed to recommence translation, which seems to be the essential function of trans-translation. This Bordetella parapertussis (strain 12822 / ATCC BAA-587 / NCTC 13253) protein is SsrA-binding protein.